The chain runs to 345 residues: Ketol-acid reductoisomerase (NADP(+)) (345 aa).

A KARI N-terminal Rossmann domain is found at 2–182 (AKVYHDSSAD…GTTRAGVLET (181 aa)). Residues 25 to 28 (YGSQ), arginine 48, serine 51, serine 53, and 83 to 86 (DTEQ) contribute to the NADP(+) site. The active site involves histidine 108. Glycine 134 serves as a coordination point for NADP(+). The region spanning 183–328 (TFKEETETDL…AQLRDMMTFL (146 aa)) is the KARI C-terminal knotted domain. Mg(2+)-binding residues include aspartate 191, glutamate 195, glutamate 227, and glutamate 231. Serine 252 contributes to the substrate binding site.

The protein belongs to the ketol-acid reductoisomerase family. The cofactor is Mg(2+).

The catalysed reaction is (2R)-2,3-dihydroxy-3-methylbutanoate + NADP(+) = (2S)-2-acetolactate + NADPH + H(+). It carries out the reaction (2R,3R)-2,3-dihydroxy-3-methylpentanoate + NADP(+) = (S)-2-ethyl-2-hydroxy-3-oxobutanoate + NADPH + H(+). It participates in amino-acid biosynthesis; L-isoleucine biosynthesis; L-isoleucine from 2-oxobutanoate: step 2/4. The protein operates within amino-acid biosynthesis; L-valine biosynthesis; L-valine from pyruvate: step 2/4. In terms of biological role, involved in the biosynthesis of branched-chain amino acids (BCAA). Catalyzes an alkyl-migration followed by a ketol-acid reduction of (S)-2-acetolactate (S2AL) to yield (R)-2,3-dihydroxy-isovalerate. In the isomerase reaction, S2AL is rearranged via a Mg-dependent methyl migration to produce 3-hydroxy-3-methyl-2-ketobutyrate (HMKB). In the reductase reaction, this 2-ketoacid undergoes a metal-dependent reduction by NADPH to yield (R)-2,3-dihydroxy-isovalerate. In Koribacter versatilis (strain Ellin345), this protein is Ketol-acid reductoisomerase (NADP(+)).